Here is a 272-residue protein sequence, read N- to C-terminus: tRNA (guanine-N(7)-)-methyltransferase (272 aa).

Basic and acidic residues predominate over residues 1–20; that stretch reads MSTDSESKRRAYREEKEGAR. The tract at residues 1-43 is disordered; it reads MSTDSESKRRAYREEKEGARKKSVKLAPEATPESKPDLPRKRY. S-adenosyl-L-methionine contacts are provided by residues G89, 112–113, 148–149, and C168; these read EI and NA. D171 is an active-site residue. 246 to 248 serves as a coordination point for S-adenosyl-L-methionine; the sequence is TEE.

This sequence belongs to the class I-like SAM-binding methyltransferase superfamily. TrmB family. Forms a complex with TRM82.

The protein localises to the nucleus. It carries out the reaction guanosine(46) in tRNA + S-adenosyl-L-methionine = N(7)-methylguanosine(46) in tRNA + S-adenosyl-L-homocysteine. Its pathway is tRNA modification; N(7)-methylguanine-tRNA biosynthesis. In terms of biological role, catalyzes the formation of N(7)-methylguanine at position 46 (m7G46) in tRNA. The sequence is that of tRNA (guanine-N(7)-)-methyltransferase from Meyerozyma guilliermondii (strain ATCC 6260 / CBS 566 / DSM 6381 / JCM 1539 / NBRC 10279 / NRRL Y-324) (Yeast).